Here is a 359-residue protein sequence, read N- to C-terminus: 4-hydroxyproline 2-epimerase (359 aa).

The active-site Proton acceptor is Cys-126. Substrate is bound by residues 127–128 (GH), His-248, and Asp-274. The active-site Proton donor is the Cys-278. 279–280 (GT) lines the substrate pocket.

Belongs to the proline racemase family.

It catalyses the reaction trans-4-hydroxy-L-proline = cis-4-hydroxy-D-proline. Functionally, catalyzes the epimerization of trans-4-hydroxy-L-proline (t4LHyp) to cis-4-hydroxy-D-proline (c4DHyp). Is likely involved in a degradation pathway that converts t4LHyp to alpha-ketoglutarate. Displays no proline racemase activity. The polypeptide is 4-hydroxyproline 2-epimerase (Planctopirus limnophila (strain ATCC 43296 / DSM 3776 / IFAM 1008 / Mu 290) (Planctomyces limnophilus)).